The chain runs to 326 residues: ATP-dependent 6-phosphofructokinase (326 aa).

Glycine 12 contacts ATP. 22–26 (RAIIK) is an ADP binding site. ATP is bound by residues 73 to 74 (RF) and 103 to 106 (GDGS). Aspartate 104 is a Mg(2+) binding site. 126–128 (TID) lines the substrate pocket. Aspartate 128 serves as the catalytic Proton acceptor. Arginine 155 serves as a coordination point for ADP. Residues arginine 163 and 170 to 172 (MGH) each bind substrate. ADP contacts are provided by residues 186–188 (GSE), lysine 212, and 215–217 (KRS). Residues glutamate 224, lysine 246, and 252 to 255 (HIQR) contribute to the substrate site.

It belongs to the phosphofructokinase type A (PFKA) family. ATP-dependent PFK group I subfamily. Prokaryotic clade 'B1' sub-subfamily. Homotetramer. Mg(2+) serves as cofactor.

It is found in the cytoplasm. The catalysed reaction is beta-D-fructose 6-phosphate + ATP = beta-D-fructose 1,6-bisphosphate + ADP + H(+). It participates in carbohydrate degradation; glycolysis; D-glyceraldehyde 3-phosphate and glycerone phosphate from D-glucose: step 3/4. Allosterically activated by ADP and other diphosphonucleosides, and allosterically inhibited by phosphoenolpyruvate. In terms of biological role, catalyzes the phosphorylation of D-fructose 6-phosphate to fructose 1,6-bisphosphate by ATP, the first committing step of glycolysis. In Mycoplasmopsis pulmonis (strain UAB CTIP) (Mycoplasma pulmonis), this protein is ATP-dependent 6-phosphofructokinase.